The chain runs to 146 residues: 3-dehydroquinate dehydratase (146 aa).

The active-site Proton acceptor is the Tyr-22. Positions 73, 79, and 86 each coordinate substrate. The active-site Proton donor is His-101. Substrate contacts are provided by residues 102–103 and Arg-112; that span reads IS.

Belongs to the type-II 3-dehydroquinase family. As to quaternary structure, homododecamer.

It carries out the reaction 3-dehydroquinate = 3-dehydroshikimate + H2O. It participates in metabolic intermediate biosynthesis; chorismate biosynthesis; chorismate from D-erythrose 4-phosphate and phosphoenolpyruvate: step 3/7. Catalyzes a trans-dehydration via an enolate intermediate. This Corynebacterium pseudotuberculosis (strain C231) protein is 3-dehydroquinate dehydratase (aroQ).